A 239-amino-acid chain; its full sequence is Octanoyltransferase (239 aa).

In terms of domain architecture, BPL/LPL catalytic spans 59-239; the sequence is PFSPQAVWLL…KRRFKLNWEK (181 aa). Residues 101–108, 168–170, and 181–183 contribute to the substrate site; these read RGGEVTHH, SIG, and GFS. Residue Cys-199 is the Acyl-thioester intermediate of the active site.

This sequence belongs to the LipB family.

The protein resides in the cytoplasm. The enzyme catalyses octanoyl-[ACP] + L-lysyl-[protein] = N(6)-octanoyl-L-lysyl-[protein] + holo-[ACP] + H(+). It participates in protein modification; protein lipoylation via endogenous pathway; protein N(6)-(lipoyl)lysine from octanoyl-[acyl-carrier-protein]: step 1/2. Its function is as follows. Catalyzes the transfer of endogenously produced octanoic acid from octanoyl-acyl-carrier-protein onto the lipoyl domains of lipoate-dependent enzymes. Lipoyl-ACP can also act as a substrate although octanoyl-ACP is likely to be the physiological substrate. This is Octanoyltransferase from Prochlorococcus marinus (strain NATL2A).